The following is a 308-amino-acid chain: Ectoine dioxygenase (308 aa).

Position 131 (Gln-131) interacts with L-ectoine. Lys-137 serves as a coordination point for 2-oxoglutarate. Fe cation-binding residues include His-148, Asp-150, and His-249.

Belongs to the PhyH family. EctD subfamily. As to quaternary structure, homodimer. Fe(2+) is required as a cofactor.

It carries out the reaction L-ectoine + 2-oxoglutarate + O2 = 5-hydroxyectoine + succinate + CO2. Functionally, involved in the biosynthesis of 5-hydroxyectoine, called compatible solute, which helps organisms to survive extreme osmotic stress by acting as a highly soluble organic osmolyte. Catalyzes the 2-oxoglutarate-dependent selective hydroxylation of L-ectoine to yield (4S,5S)-5-hydroxyectoine. In Bordetella bronchiseptica (strain ATCC BAA-588 / NCTC 13252 / RB50) (Alcaligenes bronchisepticus), this protein is Ectoine dioxygenase.